Consider the following 343-residue polypeptide: L-threonine 3-dehydrogenase (343 aa).

Cysteine 40 is a binding site for Zn(2+). Active-site charge relay system residues include threonine 42 and histidine 45. Zn(2+) contacts are provided by histidine 65, glutamate 66, cysteine 95, cysteine 98, cysteine 101, and cysteine 109. NAD(+) is bound by residues isoleucine 177, aspartate 197, arginine 202, 264-266, and 288-289; these read LGI and IY.

Belongs to the zinc-containing alcohol dehydrogenase family. In terms of assembly, homotetramer. It depends on Zn(2+) as a cofactor.

The protein localises to the cytoplasm. It carries out the reaction L-threonine + NAD(+) = (2S)-2-amino-3-oxobutanoate + NADH + H(+). It functions in the pathway amino-acid degradation; L-threonine degradation via oxydo-reductase pathway; glycine from L-threonine: step 1/2. Functionally, catalyzes the NAD(+)-dependent oxidation of L-threonine to 2-amino-3-ketobutyrate. The polypeptide is L-threonine 3-dehydrogenase (Photobacterium profundum (strain SS9)).